Reading from the N-terminus, the 288-residue chain is Polyamine aminopropyltransferase (288 aa).

The PABS domain maps to 9-238; it reads ETLHDQFGQY…GIMTFAWATD (230 aa). Gln-33 contacts S-methyl-5'-thioadenosine. His-64 and Asp-88 together coordinate spermidine. S-methyl-5'-thioadenosine contacts are provided by residues Glu-108 and 140-141; that span reads DG. Residue Asp-158 is the Proton acceptor of the active site. 158–161 serves as a coordination point for spermidine; that stretch reads DCTD. Pro-165 lines the S-methyl-5'-thioadenosine pocket.

Belongs to the spermidine/spermine synthase family. In terms of assembly, homodimer or homotetramer.

The protein resides in the cytoplasm. The catalysed reaction is S-adenosyl 3-(methylsulfanyl)propylamine + putrescine = S-methyl-5'-thioadenosine + spermidine + H(+). The protein operates within amine and polyamine biosynthesis; spermidine biosynthesis; spermidine from putrescine: step 1/1. Functionally, catalyzes the irreversible transfer of a propylamine group from the amino donor S-adenosylmethioninamine (decarboxy-AdoMet) to putrescine (1,4-diaminobutane) to yield spermidine. The polypeptide is Polyamine aminopropyltransferase (Shigella dysenteriae serotype 1 (strain Sd197)).